Consider the following 156-residue polypeptide: dCTP deaminase (156 aa).

DCTP-binding positions include 79–84 (RSSLAR), Asp95, Gln124, and Tyr138.

This sequence belongs to the dCTP deaminase family. As to quaternary structure, homotrimer.

It carries out the reaction dCTP + H2O + H(+) = dUTP + NH4(+). It participates in pyrimidine metabolism; dUMP biosynthesis; dUMP from dCTP (dUTP route): step 1/2. In terms of biological role, catalyzes the deamination of dCTP to dUTP. The sequence is that of dCTP deaminase from Pyrococcus horikoshii (strain ATCC 700860 / DSM 12428 / JCM 9974 / NBRC 100139 / OT-3).